The sequence spans 126 residues: Small ribosomal subunit protein uS13 (126 aa).

Residues 101–126 (QKTKNNCRTRKGKKKTVANKKKKINK) are disordered.

Belongs to the universal ribosomal protein uS13 family. Part of the 30S ribosomal subunit. Forms a loose heterodimer with protein S19. Forms two bridges to the 50S subunit in the 70S ribosome.

Its function is as follows. Located at the top of the head of the 30S subunit, it contacts several helices of the 16S rRNA. In the 70S ribosome it contacts the 23S rRNA (bridge B1a) and protein L5 of the 50S subunit (bridge B1b), connecting the 2 subunits; these bridges are implicated in subunit movement. Contacts the tRNAs in the A and P-sites. The polypeptide is Small ribosomal subunit protein uS13 (Karelsulcia muelleri (strain GWSS) (Sulcia muelleri)).